The sequence spans 317 residues: OVARIAN TUMOR DOMAIN-containing deubiquitinating enzyme 4 (317 aa).

The region spanning 168–306 (YSIIGIPGDG…FGHYDALLLH (139 aa)) is the OTU domain. Aspartate 176 is a catalytic residue. Cysteine 179 (nucleophile) is an active-site residue. Residue histidine 299 is part of the active site.

This sequence belongs to the peptidase C65 family.

Its subcellular location is the cytoplasm. It catalyses the reaction Thiol-dependent hydrolysis of ester, thioester, amide, peptide and isopeptide bonds formed by the C-terminal Gly of ubiquitin (a 76-residue protein attached to proteins as an intracellular targeting signal).. Functionally, hydrolase that can remove conjugated ubiquitin from proteins in vitro and may therefore play an important regulatory role at the level of protein turnover by preventing degradation. Cysteine protease with a preference for 'Lys-63' over 'Lys-48'-linked over 'Met-1' ubiquitin (UB) tetramers (e.g. Ub3 and Ub4) as substrates. Also cleaves RUB-GST fusion. The protein is OVARIAN TUMOR DOMAIN-containing deubiquitinating enzyme 4 of Arabidopsis thaliana (Mouse-ear cress).